The primary structure comprises 303 residues: Coenzyme PQQ synthesis protein B (303 aa).

Belongs to the PqqB family.

It participates in cofactor biosynthesis; pyrroloquinoline quinone biosynthesis. May be involved in the transport of PQQ or its precursor to the periplasm. In Pseudomonas putida (strain ATCC 700007 / DSM 6899 / JCM 31910 / BCRC 17059 / LMG 24140 / F1), this protein is Coenzyme PQQ synthesis protein B.